Consider the following 286-residue polypeptide: NADPH-dependent 7-cyano-7-deazaguanine reductase (286 aa).

Residue 88-90 (VES) participates in substrate binding. 90-91 (SK) is an NADPH binding site. The Thioimide intermediate role is filled by Cys194. Catalysis depends on Asp201, which acts as the Proton donor. 233–234 (HE) provides a ligand contact to substrate. 262 to 263 (RG) serves as a coordination point for NADPH.

It belongs to the GTP cyclohydrolase I family. QueF type 2 subfamily. As to quaternary structure, homodimer.

The protein resides in the cytoplasm. The enzyme catalyses 7-aminomethyl-7-carbaguanine + 2 NADP(+) = 7-cyano-7-deazaguanine + 2 NADPH + 3 H(+). The protein operates within tRNA modification; tRNA-queuosine biosynthesis. Catalyzes the NADPH-dependent reduction of 7-cyano-7-deazaguanine (preQ0) to 7-aminomethyl-7-deazaguanine (preQ1). The chain is NADPH-dependent 7-cyano-7-deazaguanine reductase from Colwellia psychrerythraea (strain 34H / ATCC BAA-681) (Vibrio psychroerythus).